A 207-amino-acid chain; its full sequence is Urease accessory protein UreG (207 aa).

Residue 12 to 19 (GPVGAGKT) coordinates GTP.

The protein belongs to the SIMIBI class G3E GTPase family. UreG subfamily. In terms of assembly, homodimer. UreD, UreF and UreG form a complex that acts as a GTP-hydrolysis-dependent molecular chaperone, activating the urease apoprotein by helping to assemble the nickel containing metallocenter of UreC. The UreE protein probably delivers the nickel.

Its subcellular location is the cytoplasm. Facilitates the functional incorporation of the urease nickel metallocenter. This process requires GTP hydrolysis, probably effectuated by UreG. In Cereibacter sphaeroides (strain ATCC 17023 / DSM 158 / JCM 6121 / CCUG 31486 / LMG 2827 / NBRC 12203 / NCIMB 8253 / ATH 2.4.1.) (Rhodobacter sphaeroides), this protein is Urease accessory protein UreG.